The primary structure comprises 174 residues: MDRRTKEQVAVELHEKVKSFKLAVLANFSGMGVAKMTTLRNDLRKSNAELKVVKNTLLRIASRDTSLEALQDDFKGPLALILGYGDPVEPSKILSDFAKKNAELELKIGMLSDKVITVEQLSALAELPSREILLAKLLSVMVGVQTQLVNVLSAVPRGLVQVLDGYRAKKEESN.

This sequence belongs to the universal ribosomal protein uL10 family. Part of the ribosomal stalk of the 50S ribosomal subunit. The N-terminus interacts with L11 and the large rRNA to form the base of the stalk. The C-terminus forms an elongated spine to which L12 dimers bind in a sequential fashion forming a multimeric L10(L12)X complex.

Forms part of the ribosomal stalk, playing a central role in the interaction of the ribosome with GTP-bound translation factors. This chain is Large ribosomal subunit protein uL10, found in Syntrophus aciditrophicus (strain SB).